The sequence spans 190 residues: Large ribosomal subunit protein bL25 (190 aa).

The interval 1-20 (MSEQKTLSVQKRDNLGKGAN) is disordered.

It belongs to the bacterial ribosomal protein bL25 family. CTC subfamily. In terms of assembly, part of the 50S ribosomal subunit; part of the 5S rRNA/L5/L18/L25 subcomplex. Contacts the 5S rRNA. Binds to the 5S rRNA independently of L5 and L18.

Its function is as follows. This is one of the proteins that binds to the 5S RNA in the ribosome where it forms part of the central protuberance. This Nitratidesulfovibrio vulgaris (strain ATCC 29579 / DSM 644 / CCUG 34227 / NCIMB 8303 / VKM B-1760 / Hildenborough) (Desulfovibrio vulgaris) protein is Large ribosomal subunit protein bL25.